A 52-amino-acid chain; its full sequence is Large ribosomal subunit protein bL33 (52 aa).

The protein belongs to the bacterial ribosomal protein bL33 family.

This chain is Large ribosomal subunit protein bL33, found in Chlamydia trachomatis serovar A (strain ATCC VR-571B / DSM 19440 / HAR-13).